Reading from the N-terminus, the 103-residue chain is Small ribosomal subunit protein uS10 (103 aa).

The protein belongs to the universal ribosomal protein uS10 family. In terms of assembly, part of the 30S ribosomal subunit.

Its function is as follows. Involved in the binding of tRNA to the ribosomes. The protein is Small ribosomal subunit protein uS10 of Jannaschia sp. (strain CCS1).